A 377-amino-acid polypeptide reads, in one-letter code: Histone deacetylase 8 (377 aa).

The tract at residues 14-324 is histone deacetylase; the sequence is LPPVYIYSPE…WTYLTGVILG (311 aa). Position 39 is a phosphoserine (S39). D101 contacts substrate. The active-site Proton acceptor is H143. Substrate is bound at residue G151. Positions 178, 180, and 267 each coordinate a divalent metal cation. Position 306 (Y306) interacts with substrate.

It belongs to the histone deacetylase family. HD type 1 subfamily. As to quaternary structure, interacts with CBFA2T3. Interacts with phosphorylated SMG5/EST1B; this interaction protects SMG5 from ubiquitin-mediated degradation. Associates with alpha-SMA (smooth muscle alpha-actin). A divalent metal cation serves as cofactor. Post-translationally, phosphorylated by PKA on serine 39. Phosphorylation reduces deacetylase activity observed preferentially on histones H3 and H4.

The protein resides in the nucleus. Its subcellular location is the chromosome. It is found in the cytoplasm. It catalyses the reaction N(6)-acetyl-L-lysyl-[histone] + H2O = L-lysyl-[histone] + acetate. The enzyme catalyses N(6)-acetyl-L-lysyl-[protein] + H2O = L-lysyl-[protein] + acetate. The catalysed reaction is N(6)-(2E)-butenoyl-L-lysyl-[protein] + H2O = (2E)-2-butenoate + L-lysyl-[protein]. Its activity is inhibited by trichostatin A (TSA) and butyrate, 2 well known histone deacetylase inhibitors. Its function is as follows. Histone deacetylase that catalyzes the deacetylation of lysine residues on the N-terminal part of the core histones (H2A, H2B, H3 and H4). Histone deacetylation gives a tag for epigenetic repression and plays an important role in transcriptional regulation, cell cycle progression and developmental events. Histone deacetylases act via the formation of large multiprotein complexes. Also involved in the deacetylation of cohesin complex protein SMC3 regulating release of cohesin complexes from chromatin. May play a role in smooth muscle cell contractility. In addition to protein deacetylase activity, also has protein-lysine deacylase activity: acts as a protein decrotonylase by mediating decrotonylation ((2E)-butenoyl) of histones. The polypeptide is Histone deacetylase 8 (HDAC8) (Bos taurus (Bovine)).